The sequence spans 494 residues: UPF0371 protein SP70585_0405 (494 aa).

It belongs to the UPF0371 family.

This is UPF0371 protein SP70585_0405 from Streptococcus pneumoniae (strain 70585).